The primary structure comprises 244 residues: Venom nerve growth factor (244 aa).

Residues methionine 1 to alanine 18 form the signal peptide. A propeptide spanning residues alanine 19 to arginine 125 is cleaved from the precursor. Cystine bridges form between cysteine 139–cysteine 204, cysteine 182–cysteine 232, and cysteine 192–cysteine 234. An N-linked (GlcNAc...) asparagine glycan is attached at asparagine 148.

This sequence belongs to the NGF-beta family. In terms of assembly, homodimer; non-covalently linked. N-glycosylated. Expressed by the venom gland.

It localises to the secreted. Functionally, nerve growth factor is important for the development and maintenance of the sympathetic and sensory nervous systems. It stimulates division and differentiation of sympathetic and embryonic sensory neurons as well as basal forebrain cholinergic neurons in the brain. Its relevance in the snake venom is not clear. However, it has been shown to inhibit metalloproteinase-dependent proteolysis of platelet glycoprotein Ib alpha, suggesting a metalloproteinase inhibition to prevent metalloprotease autodigestion and/or protection against prey proteases. Binds a lipid between the two protein chains in the homodimer. The lipid-bound form promotes histamine relase from mouse mast cells, contrary to the lipid-free form. It promotes neurite outgrowth in rat PC12 pheochromocytoma cells. This chain is Venom nerve growth factor, found in Macrovipera lebetinus (Levantine viper).